We begin with the raw amino-acid sequence, 513 residues long: ATP synthase subunit alpha (513 aa).

169–176 (GDRQTGKT) is a binding site for ATP.

Belongs to the ATPase alpha/beta chains family. F-type ATPases have 2 components, CF(1) - the catalytic core - and CF(0) - the membrane proton channel. CF(1) has five subunits: alpha(3), beta(3), gamma(1), delta(1), epsilon(1). CF(0) has three main subunits: a(1), b(2) and c(9-12). The alpha and beta chains form an alternating ring which encloses part of the gamma chain. CF(1) is attached to CF(0) by a central stalk formed by the gamma and epsilon chains, while a peripheral stalk is formed by the delta and b chains.

The protein resides in the cell inner membrane. The enzyme catalyses ATP + H2O + 4 H(+)(in) = ADP + phosphate + 5 H(+)(out). In terms of biological role, produces ATP from ADP in the presence of a proton gradient across the membrane. The alpha chain is a regulatory subunit. The polypeptide is ATP synthase subunit alpha (Klebsiella pneumoniae subsp. pneumoniae (strain ATCC 700721 / MGH 78578)).